Here is a 432-residue protein sequence, read N- to C-terminus: 3-phosphoshikimate 1-carboxyvinyltransferase (432 aa).

3-phosphoshikimate contacts are provided by K23, S24, and R28. K23 contributes to the phosphoenolpyruvate binding site. Residues G95 and R123 each coordinate phosphoenolpyruvate. 3-phosphoshikimate is bound by residues S167, Q169, D317, and K344. A phosphoenolpyruvate-binding site is contributed by Q169. D317 acts as the Proton acceptor in catalysis. 2 residues coordinate phosphoenolpyruvate: R348 and R390.

The protein belongs to the EPSP synthase family. As to quaternary structure, monomer.

Its subcellular location is the cytoplasm. It carries out the reaction 3-phosphoshikimate + phosphoenolpyruvate = 5-O-(1-carboxyvinyl)-3-phosphoshikimate + phosphate. Its pathway is metabolic intermediate biosynthesis; chorismate biosynthesis; chorismate from D-erythrose 4-phosphate and phosphoenolpyruvate: step 6/7. Its function is as follows. Catalyzes the transfer of the enolpyruvyl moiety of phosphoenolpyruvate (PEP) to the 5-hydroxyl of shikimate-3-phosphate (S3P) to produce enolpyruvyl shikimate-3-phosphate and inorganic phosphate. The protein is 3-phosphoshikimate 1-carboxyvinyltransferase of Staphylococcus haemolyticus (strain JCSC1435).